A 411-amino-acid chain; its full sequence is Serpin A3-5 (411 aa).

The N-terminal stretch at M1–C24 is a signal peptide. N-linked (GlcNAc...) asparagine glycosylation is found at N100, N180, N230, N264, and N318.

This sequence belongs to the serpin family. As to quaternary structure, homodimer.

The protein localises to the cytoplasmic vesicle. It is found in the secretory vesicle. Its subcellular location is the chromaffin granule. The protein resides in the secreted. In terms of biological role, serine protease inhibitor. In Bos taurus (Bovine), this protein is Serpin A3-5.